The primary structure comprises 524 residues: Bifunctional methyltransferase (524 aa).

Positions 1–306 (MQCSIKQILS…GHSRVILFSP (306 aa)) are hemK. The tract at residues 1 to 308 (MQCSIKQILS…SRVILFSPIN (308 aa)) is RF MTase. Residues 146–150 (GTGSG), aspartate 169, tryptophan 198, asparagine 213, glutamate 353, glutamate 378, asparagine 405, and aspartate 427 each bind S-adenosyl-L-methionine. 213–216 (NPPY) contacts substrate. The tRNA (guanine-N(7)-)-methyltransferase stretch occupies residues 307–524 (INLNRSYARR…MILRHVLGDH (218 aa)). Residues 311 to 524 (RSYARRIGKS…MILRHVLGDH (214 aa)) are tRNA MTase. The active site involves aspartate 427. Positions 431 and 463 each coordinate substrate.

In the C-terminal section; belongs to the class I-like SAM-binding methyltransferase superfamily. TrmB family. It in the N-terminal section; belongs to the protein N5-glutamine methyltransferase family. PrmC subfamily.

The enzyme catalyses L-glutaminyl-[peptide chain release factor] + S-adenosyl-L-methionine = N(5)-methyl-L-glutaminyl-[peptide chain release factor] + S-adenosyl-L-homocysteine + H(+). It carries out the reaction guanosine(46) in tRNA + S-adenosyl-L-methionine = N(7)-methylguanosine(46) in tRNA + S-adenosyl-L-homocysteine. In terms of biological role, methylates the class 1 translation termination release factors RF1/PrfA and RF2/PrfB on the glutamine residue of the universally conserved GGQ motif. Functionally, catalyzes the formation of N(7)-methylguanine at position 46 (m7G46) in tRNA. This Rickettsia conorii (strain ATCC VR-613 / Malish 7) protein is Bifunctional methyltransferase (prmC/trmB).